The chain runs to 447 residues: Glutamyl-tRNA reductase (447 aa).

Substrate is bound by residues 49 to 52 (TCNR), S109, 114 to 116 (EQQ), and Q120. The Nucleophile role is filled by C50. Position 189-194 (189-194 (GAGSMG)) interacts with NADP(+).

Belongs to the glutamyl-tRNA reductase family. In terms of assembly, homodimer.

The catalysed reaction is (S)-4-amino-5-oxopentanoate + tRNA(Glu) + NADP(+) = L-glutamyl-tRNA(Glu) + NADPH + H(+). Its pathway is porphyrin-containing compound metabolism; protoporphyrin-IX biosynthesis; 5-aminolevulinate from L-glutamyl-tRNA(Glu): step 1/2. In terms of biological role, catalyzes the NADPH-dependent reduction of glutamyl-tRNA(Glu) to glutamate 1-semialdehyde (GSA). This is Glutamyl-tRNA reductase from Mycobacterium sp. (strain JLS).